A 450-amino-acid chain; its full sequence is UDP-N-acetylmuramoylalanine--D-glutamate ligase (450 aa).

Glycine 119 to threonine 125 serves as a coordination point for ATP.

Belongs to the MurCDEF family.

It localises to the cytoplasm. The catalysed reaction is UDP-N-acetyl-alpha-D-muramoyl-L-alanine + D-glutamate + ATP = UDP-N-acetyl-alpha-D-muramoyl-L-alanyl-D-glutamate + ADP + phosphate + H(+). It participates in cell wall biogenesis; peptidoglycan biosynthesis. In terms of biological role, cell wall formation. Catalyzes the addition of glutamate to the nucleotide precursor UDP-N-acetylmuramoyl-L-alanine (UMA). The sequence is that of UDP-N-acetylmuramoylalanine--D-glutamate ligase from Streptococcus pneumoniae (strain CGSP14).